A 514-amino-acid polypeptide reads, in one-letter code: Cytochrome P450 94A1 (514 aa).

Residues 7–29 (EVLLPYLLPLLLLILPTTIFFLT) traverse the membrane as a helical segment. Heme is bound at residue Cys-458.

It belongs to the cytochrome P450 family. Heme is required as a cofactor.

Its subcellular location is the endoplasmic reticulum membrane. Its function is as follows. Catalyzes the omega-hydroxylation of various fatty acids (FA) from 10 to 18 carbon atoms. The substrate specificity is higher for laurate &gt; palmitate &gt; myristate &gt; linolenate &gt; linoleate &gt; oleate &gt; caprate. May play a minor role in cutin synthesis and could be involved in plant defense. The protein is Cytochrome P450 94A1 (CYP94A1) of Vicia sativa (Spring vetch).